Reading from the N-terminus, the 313-residue chain is Dimethyladenosine transferase (313 aa).

S-adenosyl-L-methionine-binding residues include His37, Leu39, Gly64, Glu85, Asp113, and Asn128.

It belongs to the class I-like SAM-binding methyltransferase superfamily. rRNA adenine N(6)-methyltransferase family. In terms of assembly, part of the small subunit (SSU) processome, composed of more than 70 proteins and the RNA chaperone small nucleolar RNA (snoRNA) U3.

The protein localises to the nucleus. The protein resides in the nucleoplasm. It localises to the nucleolus. It carries out the reaction adenosine(1779)/adenosine(1780) in 18S rRNA + 4 S-adenosyl-L-methionine = N(6)-dimethyladenosine(1779)/N(6)-dimethyladenosine(1780) in 18S rRNA + 4 S-adenosyl-L-homocysteine + 4 H(+). Specifically dimethylates two adjacent adenosines in the loop of a conserved hairpin near the 3'-end of 18S rRNA in the 40S particle. Involved in the pre-rRNA processing steps leading to small-subunit rRNA production independently of its RNA-modifying catalytic activity. Part of the small subunit (SSU) processome, first precursor of the small eukaryotic ribosomal subunit. During the assembly of the SSU processome in the nucleolus, many ribosome biogenesis factors, an RNA chaperone and ribosomal proteins associate with the nascent pre-rRNA and work in concert to generate RNA folding, modifications, rearrangements and cleavage as well as targeted degradation of pre-ribosomal RNA by the RNA exosome. The polypeptide is Dimethyladenosine transferase (Dimt1) (Mus musculus (Mouse)).